The chain runs to 162 residues: Caveolin-2 (162 aa).

Residues 1 to 86 (MGLETEKADV…FEISKYVLYK (86 aa)) are Cytoplasmic-facing. Y19 is subject to Phosphotyrosine; by SRC. S20 and S23 each carry phosphoserine. Y27 is subject to Phosphotyrosine; by SRC. S36 is modified (phosphoserine). The segment at residues 87 to 107 (FLTVFLAIPLAFVAGILFATL) is an intramembrane region (helical). Over 108–162 (SCLHIWIIMPFVKTCLMVLPSVQTIWKSVTDVIIAPLCTSVGRSFSSISLRLSQD) the chain is Cytoplasmic.

It belongs to the caveolin family. As to quaternary structure, monomer or homodimer. Interacts with CAV1; the interaction forms a stable heterooligomeric complex that is required for targeting to lipid rafts and for caveolae formation. Tyrosine phosphorylated forms do not form heterooligomers with the Tyr-19-phosphorylated form existing as a monomer or dimer, and the Tyr-27-form as a monomer only. Interacts (tyrosine phosphorylated form) with the SH2 domain-containing proteins, RASA1, NCK1 and SRC. Interacts (tyrosine phosphorylated form) with INSR, the interaction (Tyr-27-phosphorylated form) is increased on insulin stimulation. Interacts (Tyr-19 phosphorylated form) with MAPK1 (phosphorylated form); the interaction, promoted by insulin, leads to nuclear location and MAPK1 activation. Interacts with STAT3; the interaction is increased on insulin-induced tyrosine phosphorylation leading to STAT activation. Phosphorylated on serine and tyrosine residues. CAV1 promotes phosphorylation on Ser-23 which then targets the complex to the plasma membrane, lipid rafts and caveolae. Phosphorylation on Ser-36 appears to modulate mitosis in endothelial cells. Phosphorylation on both Tyr-19 and Tyr-27 is required for insulin-induced 'Ser-727' phosphorylation of STAT3 and its activation. Phosphorylation on Tyr-19 is required for insulin-induced phosphorylation of MAPK1 and DNA binding of STAT3. Tyrosine phosphorylation is induced by both EGF and insulin (By. similarity).

The protein resides in the nucleus. It localises to the cytoplasm. Its subcellular location is the golgi apparatus membrane. It is found in the cell membrane. The protein localises to the membrane. The protein resides in the caveola. Functionally, may act as a scaffolding protein within caveolar membranes. Interacts directly with G-protein alpha subunits and can functionally regulate their activity. Acts as an accessory protein in conjunction with CAV1 in targeting to lipid rafts and driving caveolae formation. The Ser-36 phosphorylated form has a role in modulating mitosis in endothelial cells. Positive regulator of cellular mitogenesis of the MAPK signaling pathway. Required for the insulin-stimulated nuclear translocation and activation of MAPK1 and STAT3, and the subsequent regulation of cell cycle progression. The polypeptide is Caveolin-2 (CAV2) (Otolemur garnettii (Small-eared galago)).